Consider the following 113-residue polypeptide: Ribulose bisphosphate carboxylase small subunit (113 aa).

The protein belongs to the RuBisCO small chain family. Heterohexadecamer of 8 large and 8 small subunits.

It is found in the carboxysome. RuBisCO catalyzes two reactions: the carboxylation of D-ribulose 1,5-bisphosphate, the primary event in carbon dioxide fixation, as well as the oxidative fragmentation of the pentose substrate in the photorespiration process. Both reactions occur simultaneously and in competition at the same active site. Although the small subunit is not catalytic it is essential for maximal activity. This chain is Ribulose bisphosphate carboxylase small subunit, found in Synechococcus sp. (strain WH7803).